The chain runs to 103 residues: Nucleoid-associated protein BH0035 (103 aa).

Residues 1-20 show a composition bias toward low complexity; that stretch reads MKNMGQMMKQMQKMQKQMMK. Positions 1–29 are disordered; it reads MKNMGQMMKQMQKMQKQMMKAQEELKEKT.

This sequence belongs to the YbaB/EbfC family. As to quaternary structure, homodimer.

The protein localises to the cytoplasm. The protein resides in the nucleoid. Its function is as follows. Binds to DNA and alters its conformation. May be involved in regulation of gene expression, nucleoid organization and DNA protection. The protein is Nucleoid-associated protein BH0035 of Halalkalibacterium halodurans (strain ATCC BAA-125 / DSM 18197 / FERM 7344 / JCM 9153 / C-125) (Bacillus halodurans).